Consider the following 218-residue polypeptide: Cell division protein SepF (218 aa).

Residues 24–115 (EDVTASTDNV…IANRREQYQQ (92 aa)) are disordered. Residues 28-43 (ASTDNVIPRSQQSVRA) show a composition bias toward polar residues. The segment covering 47-63 (PKQEPRNNHVQQDHQAR) has biased composition (basic and acidic residues).

Belongs to the SepF family. In terms of assembly, homodimer. Interacts with FtsZ.

The protein resides in the cytoplasm. Its function is as follows. Cell division protein that is part of the divisome complex and is recruited early to the Z-ring. Probably stimulates Z-ring formation, perhaps through the cross-linking of FtsZ protofilaments. Its function overlaps with FtsA. The protein is Cell division protein SepF of Streptococcus pyogenes serotype M4 (strain MGAS10750).